We begin with the raw amino-acid sequence, 519 residues long: Amphoterin-induced protein 2 (519 aa).

A signal peptide spans 1–38; that stretch reads MSLRFHTLPTLPRAVKPGCRELLCLLVIAVMVSPSASG. Positions 39-67 constitute an LRRNT domain; it reads MCPTACICATDIVSCTNKNLSKVPGNLFR. At 39 to 397 the chain is on the extracellular side; the sequence is MCPTACICAT…RSHAHEAFNT (359 aa). Intrachain disulfides connect C40-C46 and C44-C53. Residue N57 is glycosylated (N-linked (GlcNAc...) asparagine). 6 LRR repeats span residues 68 to 89, 93 to 114, 117 to 138, 141 to 162, 165 to 186, and 192 to 213; these read LIKR…WIPV, KLST…SFST, NLKC…TFQE, ALEV…AFGG, HLQK…LYTG, and DLTF…HINL. N103 carries an N-linked (GlcNAc...) asparagine glycan. An LRRCT domain is found at 227–283; the sequence is NPFVCDCSLYSLLIFWYRRHFSSVMDFKNDYTCRLWSDSRHSHQLQLLQESFLNCSY. 2 disulfide bridges follow: C231-C259 and C233-C281. N-linked (GlcNAc...) asparagine glycans are attached at residues N280, N287, N344, N372, N380, N383, and N387. Residues 288–378 form the Ig-like C2-type domain; sequence GSFHALGFIH…RLLNETVDIM (91 aa). C309 and C362 form a disulfide bridge. The helical transmembrane segment at 398–418 threads the bilayer; sequence AFTTLAACVASIVLVLLYLYL. At 419-519 the chain is on the cytoplasmic side; sequence TPCPCKCKAK…FSDTPFVAST (101 aa). Residues 498 to 519 form a disordered region; the sequence is RAKSDSDSVNSVFSDTPFVAST.

The protein belongs to the immunoglobulin superfamily. AMIGO family. As to quaternary structure, binds itself as well as AMIGO1 and AMIGO3. In terms of tissue distribution, highest level in cerebellum, retina, liver, and lung. Lower levels in cerebrum, kidney, small intestine, spleen and testis.

It is found in the cell membrane. The protein resides in the nucleus. Its function is as follows. Required for depolarization-dependent survival of cultured cerebellar granule neurons. May mediate homophilic as well as heterophilic cell-cell interaction with AMIGO1 or AMIGO3. May contribute to signal transduction through its intracellular domain. This Mus musculus (Mouse) protein is Amphoterin-induced protein 2.